The chain runs to 171 residues: Small ribosomal subunit protein uS13 (171 aa).

Positions 128–171 (HERGQKVRGQRTKSTGRTEGTIGVNVEAIKEEQAEDDAADGGEE) are disordered. Acidic residues predominate over residues 160-171 (QAEDDAADGGEE).

Belongs to the universal ribosomal protein uS13 family. In terms of assembly, part of the 30S ribosomal subunit. Forms a loose heterodimer with protein S19. Forms two bridges to the 50S subunit in the 70S ribosome.

In terms of biological role, located at the top of the head of the 30S subunit, it contacts several helices of the 16S rRNA. In the 70S ribosome it contacts the 23S rRNA (bridge B1a) and protein L5 of the 50S subunit (bridge B1b), connecting the 2 subunits; these bridges are implicated in subunit movement. The sequence is that of Small ribosomal subunit protein uS13 from Halobacterium salinarum (strain ATCC 700922 / JCM 11081 / NRC-1) (Halobacterium halobium).